The sequence spans 261 residues: UPF0246 protein Rmet_0978 (261 aa).

This sequence belongs to the UPF0246 family.

This is UPF0246 protein Rmet_0978 from Cupriavidus metallidurans (strain ATCC 43123 / DSM 2839 / NBRC 102507 / CH34) (Ralstonia metallidurans).